The sequence spans 545 residues: Glucose-6-phosphate isomerase (545 aa).

E351 (proton donor) is an active-site residue. Residues H382 and K510 contribute to the active site.

It belongs to the GPI family.

The protein resides in the cytoplasm. It carries out the reaction alpha-D-glucose 6-phosphate = beta-D-fructose 6-phosphate. The protein operates within carbohydrate biosynthesis; gluconeogenesis. Its pathway is carbohydrate degradation; glycolysis; D-glyceraldehyde 3-phosphate and glycerone phosphate from D-glucose: step 2/4. Catalyzes the reversible isomerization of glucose-6-phosphate to fructose-6-phosphate. This chain is Glucose-6-phosphate isomerase, found in Shewanella loihica (strain ATCC BAA-1088 / PV-4).